The sequence spans 2059 residues: MAFSQSFNFGNSTLMALEKGMQADDKENAQPGNGNIQVQSAGNEVNSEIQEINSEFFRDEFSYEVNQAHKPAEQSVVNVSQVQQHMAVVSNQDSEDQSRSSALNDQICTQSSFEGEDAGADAVLDQPNLDENSFLCPAQDEEASEQLKEDILHSHSVLAKQEFYQEISQVTQNLSSMSPNQLRVSPNSSRIREAMPERPAMPLDLNTLRSISAWNLPMSIQAEYKKKGVVDMFDWQVECLSKPRLLFEHCNLVYSAPTSAGKTLVSEILMLKTVLERGKKVLLILPFISVVREKMFYMQDLLTPAGYRVEGFYGGYTPPGGFESLHVAICTIEKANSIVNKLMEQGKLETIGMVVVDEVHLISDKGRGYILELLLAKILYMSRRNGLQIQVITMSATLENVQLLQSWLDAELYITNYRPVALKEMIKVGTVIYDHRLKLVRDVAKQKVLLKGLENDSDDVALLCIETLLEGCSVIVFCPSKDWCENLAVQLATAIHVQIKSETVLGQRLRTNLNPRAIAEVKQQLRDIPTGLDGVMSKAITYACAFHHAGLTTEERDIIEASFKAGALKVLVATSTLSSGVNLPARRVLIRSPLFGGKQMSSLTYRQMIGRAGRMGKDTLGESILICNEINARMGRDLVVSELQPITSCLDMDGSTHLKRALLEVISSGVANTKEDIDFFVNCTLLSAQKAFHAKEKPPDEESDANYINDALDFLVEYEFVRLQRNEERETAVYVATRLGAACLASSMPPTDGLILFAELQKSRRSFVLESELHAVYLVTPYSVCYQLQDIDWLLYVHMWEKLSSPMKKVGELVGVRDAFLYKALRGQTKLDYKQMQIHKRFYIALALEELVNETPINVVVHKYKCHRGMLQSLQQMASTFAGIVTAFCNSLQWSTLALIVSQFKDRLFFGIHRDLIDLMRIPDLSQKRARALFDAGITSLVELAGADPVELEKVLYNSISFDSAKQHDHENADEAAKRNVVRNFYITGKAGMTVSEAAKLLIGEARQFVQHEIGLGTIKWTQTQAGVEIASRAIHDGGEVDLHMSLEEEQPPVKRKLSIEENGTANSQKNPRLETVVDTQRGYKVDKNIANQSKMNPNLKEIDAQNKARRNSTAHMDNLNPISNDPCQNNVNVKTAQPIISNLNDIQKQGSQIEKMKINPATVVCSPQLANEEKPSTSQSARRKLVNEGMAERRRVALMKIQQRTQKENQSKDQPIQASRSNQLSSPVNRTPANRWTQSENPNNEMNNSQLPRRNPRNQSPVPNANRTASRKVSNAEEDLFMADDSFMLNTGLAAALTAAESKIASCTEADVIPSSQPKEPEVIGALTPHASRLKRSDQLRSQRIQSPSPTPQREIEIDLESKNESNGVSSMEISDMSMENPLMKNPLHLNASHIMSCSKVDETASSFSSIDIIDVCGHRNAFQAAIIEINNATRLGFSVGLQAQAGKQKPLIGSNLLINQVAAAENREAAARERVLFQVDDTNFISGVSFCLADNVAYYWNMQIDERAAYQGVPTPLKVQELCNLMARKDLTLVMHDGKEQLKMLRKAIPQLKRISAKLEDAKVANWLLQPDKTVNFLNMCQTFAPECTGLANLCGSGRGYSSYGLDTSSAILPRIRTAIESCVTLHILQGQTENLSRIGNGDLLKFFHDIEMPIQLTLCQMELVGFPAQKQRLQQLYQRMVAVMKKVETKIYEQHGSRFNLGSSQAVAKVLGLHRKAKGRVTTSRQVLEKLNSPISHLILGYRKLSGLLAKSIQPLMECCQADRIHGQSITYTATGRISMTEPNLQNVAKEFSIQVGSDVVHISCRSPFMPTDESRCLLSADFCQLEMRILAHMSQDKALLEVMKSSQDLFIAIAAHWNKIEESEVTQDLRNSTKQVCYGIVYGMGMRSLAESLNCSEQEARMISDQFHQAYKGIRDYTTRVVNFARSKGFVETITGRRRYLENINSDVEHLKNQAERQAVNSTIQGSAADIAKNAILKMEKNIERYREKLALGDNSVDLVMHLHDELIFEVPTGKAKKIAKVLSLTMENCVKLSVPLKVKLRIGRSWGEFKEVSV.

A disordered region spans residues D25–V45. The segment covering Q30–V45 has biased composition (polar residues). The region spanning P243–N416 is the Helicase ATP-binding domain. A256 to T263 contributes to the ATP binding site. The DEAH box signature appears at D357–H360. A Helicase C-terminal domain is found at C464–I666. 4 disordered regions span residues P1052–R1073, P1168–G1190, Q1204–V1274, and P1330–S1372. Positions E1062–N1071 are enriched in polar residues. The span at K1213–V1274 shows a compositional bias: polar residues. The span at R1355 to N1365 shows a compositional bias: basic and acidic residues.

Belongs to the DNA polymerase type-A family. Mg(2+) serves as cofactor. In terms of processing, in adult males, cleaved to produce a 100 kDa form. In terms of tissue distribution, expressed in ovaries (at protein level).

Its subcellular location is the nucleus. It catalyses the reaction DNA(n) + a 2'-deoxyribonucleoside 5'-triphosphate = DNA(n+1) + diphosphate. With respect to regulation, resistant to aphidicolin, but sensitive to dideoxythymindine triphosphate (ddTTP) and N-ethyl malemide (NEM). Multifunctional protein with both DNA polymerase and ATPase activities. Might have 3' to 5' exonuclease activity. Plays a role in different DNA repair pathways such as DNA strand cross-link repair and microhomology-mediated end-joining (MMEJ), an alternative non-homologous end-joining (NHEJ) machinery triggered in response to double-strand breaks. MMEJ is an error-prone repair pathway that produces deletions of sequences from the strand being repaired and promotes genomic rearrangements, such as telomere fusions. Utilizes short microhomologies present in partially and fully single-stranded DNA (ssDNA) as primers for DNA synthesis. Prefers poly(dA)/oligo(dT) as a template-primer. The ATPase activity is necessary during interstrand cross-link (ICL) repair and has a critical role in generating templated insertions during MMEJ. Necessary for processing DNA damage induced by oxygen and N-ethylation. In follicle cells, contributes to double-strand break repair at physiological rereplication forks necessary for survival of fertilized eggs. The protein is DNA polymerase theta of Drosophila melanogaster (Fruit fly).